The following is a 206-amino-acid chain: Bacteriochlorophyll synthase 23 kDa chain (206 aa).

Its pathway is porphyrin-containing compound metabolism; bacteriochlorophyll biosynthesis (light-independent). The polypeptide is Bacteriochlorophyll synthase 23 kDa chain (bchJ) (Cereibacter sphaeroides (strain ATCC 17023 / DSM 158 / JCM 6121 / CCUG 31486 / LMG 2827 / NBRC 12203 / NCIMB 8253 / ATH 2.4.1.) (Rhodobacter sphaeroides)).